Reading from the N-terminus, the 543-residue chain is Fiber protein (543 aa).

Residues 1–36 (MKRTRSALPANFDPVYPYDAPKPSTQPPFFNDRKGL) form a disordered region.

The protein belongs to the adenoviridae fiber family. Homotrimer. Interacts (via N-terminal tail region) with pentons.

The protein resides in the virion. It localises to the host nucleus. Functionally, forms spikes that protrude from each vertex of the icosahedral capsid. Interacts with host receptor to provide virion initial attachment to target cell. Fiber proteins are shed during virus entry, when virus is still at the cell surface. The protein is Fiber protein of Canine adenovirus serotype 1 (strain RI261) (CAdV-1).